A 65-amino-acid chain; its full sequence is Potassium channel toxin kappa-KTx 2.7 (65 aa).

The first 26 residues, 1–26 (MKTSGTVYVFLLLLAFGIFTDISSAC), serve as a signal peptide directing secretion. A propeptide spanning residues 27–39 (SEQMDDEDSYEVE) is cleaved from the precursor. Intrachain disulfides connect C45–C63 and C49–C59.

Belongs to the short scorpion toxin superfamily. Potassium channel inhibitor kappa-KTx family. Kappa-KTx 2 subfamily. Expressed by the venom gland.

Its subcellular location is the secreted. In terms of biological role, weakly inhibits the Kv7.1/KCNQ1 channel (10 uM of the toxin inhibits currents by 17.8%). The polypeptide is Potassium channel toxin kappa-KTx 2.7 (Heterometrus petersii (Asian forest scorpion)).